The chain runs to 187 residues: Peptidyl-tRNA hydrolase (187 aa).

Tyr-18 provides a ligand contact to tRNA. The Proton acceptor role is filled by His-23. TRNA is bound by residues Phe-65, Asn-67, and Asn-113.

This sequence belongs to the PTH family. As to quaternary structure, monomer.

The protein resides in the cytoplasm. It catalyses the reaction an N-acyl-L-alpha-aminoacyl-tRNA + H2O = an N-acyl-L-amino acid + a tRNA + H(+). Hydrolyzes ribosome-free peptidyl-tRNAs (with 1 or more amino acids incorporated), which drop off the ribosome during protein synthesis, or as a result of ribosome stalling. In terms of biological role, catalyzes the release of premature peptidyl moieties from peptidyl-tRNA molecules trapped in stalled 50S ribosomal subunits, and thus maintains levels of free tRNAs and 50S ribosomes. This is Peptidyl-tRNA hydrolase from Coxiella burnetii (strain RSA 331 / Henzerling II).